We begin with the raw amino-acid sequence, 468 residues long: 6-phospho-beta-galactosidase (468 aa).

D-galactose 6-phosphate contacts are provided by Q19, H116, N159, E160, and N297. E160 serves as the catalytic Proton donor. Catalysis depends on E375, which acts as the Nucleophile. Positions 428, 429, 435, and 437 each coordinate D-galactose 6-phosphate.

The protein belongs to the glycosyl hydrolase 1 family.

It carries out the reaction a 6-phospho-beta-D-galactoside + H2O = D-galactose 6-phosphate + an alcohol. Its pathway is carbohydrate metabolism; lactose degradation; D-galactose 6-phosphate and beta-D-glucose from lactose 6-phosphate: step 1/1. The protein is 6-phospho-beta-galactosidase of Streptococcus pyogenes serotype M18 (strain MGAS8232).